The chain runs to 626 residues: METKQFKAESKRLLDLMINSIYTHKEIFLRELISNSSDAIDKIYYKTLTDDSLKFERDDYYIKVVSDKENRVLKIADTGIGMTKEELENNLGVIAKSGSLQFKKENEVKEGYDIIGQFGVGFYSAFLVSDDVTVISKAFGSNEAYKWNSKGAEGYTIEPCEKEAYGTEIILKIKDNTEEENYDEFLEEYTLKSIIKKYSDFIRYPIKMDLTKTKPKEDNKEEFEEYKEEETINSMVPIWRKNKNELKAEDYENFYAEKHYGFDKPIKYIHTSVDGVVSYNAILFIPETTPYDFYTKEYEKGLELYSSGVLIMNKCGDLLPDYFGFVKGIVDSEDLSLNISREILQHDRQLKLIAKNIKTKIKNELESLLKKERDKYEKFYESFGRQLKYGVYSDFGSNKDILQDLLMFYSSKEKKMVTLAEYVSRMPEDQKYIYYAVGESNERIEKLPQIEGVLDKGYEVLYFTDDIDEFAIKMLMNYKEKEFKSVSSGDLGIEGEEKENTSSSDDKENKELFESMKDILSGKVKDVRASKRLKNHPVCLANEGELSIEMEKVLNAMPNNQNIKADKVLEININHDVFKSLKEAYEGDKEKLKLYTDLLYNQALLIEGLAINDPVEFTNNICKIMK.

Residues 1–341 (METKQFKAES…SEDLSLNISR (341 aa)) form an a; substrate-binding region. The tract at residues 342–552 (EILQHDRQLK…EGELSIEMEK (211 aa)) is b. Residues 490–509 (DLGIEGEEKENTSSSDDKEN) are disordered. A compositionally biased stretch (basic and acidic residues) spans 498–509 (KENTSSSDDKEN). The c stretch occupies residues 553-626 (VLNAMPNNQN…FTNNICKIMK (74 aa)).

It belongs to the heat shock protein 90 family. In terms of assembly, homodimer.

The protein localises to the cytoplasm. Its function is as follows. Molecular chaperone. Has ATPase activity. This chain is Chaperone protein HtpG, found in Clostridium botulinum (strain Okra / Type B1).